The sequence spans 500 residues: C6 finger domain transcription factor sirZ (500 aa).

The segment at residues 28–54 is a DNA-binding region (zn(2)-C6 fungal-type); it reads CNACHEVKLKCLGGQPCARCRNKQVEC. The segment covering 79-88 has biased composition (basic and acidic residues); the sequence is QAKAMSRPEE. 2 disordered regions span residues 79-168 and 302-332; these read QAKA…EQIS and AGSFSTSGPGSSQEGSHFLSSRHSQSSGMYQ. The span at 135-147 shows a compositional bias: acidic residues; that stretch reads GAEEELLDQEERD. Positions 154–165 are enriched in low complexity; it reads LVENPPNLNPLE. Polar residues predominate over residues 304-316; sequence SFSTSGPGSSQEG. A compositionally biased stretch (low complexity) spans 317–328; it reads SHFLSSRHSQSS.

It is found in the nucleus. Its function is as follows. Transcription factor that regulates sirodesmin production and contributes to virulence. Probably binds to the consensus motif TCGGN(3)CCGA found in the promoters of sirT, sirP, sirO, sirN, sirP, sirB, sirR, sirJ and sirQ. This Leptosphaeria maculans (Blackleg fungus) protein is C6 finger domain transcription factor sirZ.